Consider the following 106-residue polypeptide: UPF0145 protein AZOSEA16190 (106 aa).

It belongs to the UPF0145 family.

In Aromatoleum aromaticum (strain DSM 19018 / LMG 30748 / EbN1) (Azoarcus sp. (strain EbN1)), this protein is UPF0145 protein AZOSEA16190.